Here is a 368-residue protein sequence, read N- to C-terminus: Putative agmatine deiminase (368 aa).

The active-site Amidino-cysteine intermediate is the cysteine 359.

Belongs to the agmatine deiminase family.

It carries out the reaction agmatine + H2O = N-carbamoylputrescine + NH4(+). In Pectobacterium atrosepticum (strain SCRI 1043 / ATCC BAA-672) (Erwinia carotovora subsp. atroseptica), this protein is Putative agmatine deiminase.